The primary structure comprises 127 residues: Holo-[acyl-carrier-protein] synthase (127 aa).

Mg(2+) is bound by residues Asp-8 and Glu-59.

Belongs to the P-Pant transferase superfamily. AcpS family. Requires Mg(2+) as cofactor.

It localises to the cytoplasm. It carries out the reaction apo-[ACP] + CoA = holo-[ACP] + adenosine 3',5'-bisphosphate + H(+). In terms of biological role, transfers the 4'-phosphopantetheine moiety from coenzyme A to a Ser of acyl-carrier-protein. The protein is Holo-[acyl-carrier-protein] synthase of Rickettsia bellii (strain OSU 85-389).